A 239-amino-acid chain; its full sequence is tRNA (guanine-N(1)-)-methyltransferase (239 aa).

Residues Gly108 and 127–132 (LGDYVL) contribute to the S-adenosyl-L-methionine site.

The protein belongs to the RNA methyltransferase TrmD family. Homodimer.

It is found in the cytoplasm. It catalyses the reaction guanosine(37) in tRNA + S-adenosyl-L-methionine = N(1)-methylguanosine(37) in tRNA + S-adenosyl-L-homocysteine + H(+). Its function is as follows. Specifically methylates guanosine-37 in various tRNAs. In Streptococcus pneumoniae serotype 2 (strain D39 / NCTC 7466), this protein is tRNA (guanine-N(1)-)-methyltransferase.